We begin with the raw amino-acid sequence, 290 residues long: 4-hydroxybenzoate octaprenyltransferase (290 aa).

The next 8 membrane-spanning stretches (helical) occupy residues 23–43 (IGALLLLWPTLWALWVATPGV), 46–66 (LWILAVFVAGVWLMRAAGCVV), 99–119 (LFVVLVLISFLLVLTLNTMTI), 141–161 (LPQVVLGAAFGWSIPMAFAAV), 163–183 (ESVPLSCWLMFLANILWAVAY), 213–233 (LIIGILQIGVLALMAIIGELN), 234–254 (GLGWGYYWSIVVAGALFVYQQ), and 268–288 (AFMNNNYVGLVLFLGLAMSYW).

It belongs to the UbiA prenyltransferase family. Requires Mg(2+) as cofactor.

It localises to the cell inner membrane. The enzyme catalyses all-trans-octaprenyl diphosphate + 4-hydroxybenzoate = 4-hydroxy-3-(all-trans-octaprenyl)benzoate + diphosphate. It functions in the pathway cofactor biosynthesis; ubiquinone biosynthesis. Functionally, catalyzes the prenylation of para-hydroxybenzoate (PHB) with an all-trans polyprenyl group. Mediates the second step in the final reaction sequence of ubiquinone-8 (UQ-8) biosynthesis, which is the condensation of the polyisoprenoid side chain with PHB, generating the first membrane-bound Q intermediate 3-octaprenyl-4-hydroxybenzoate. This is 4-hydroxybenzoate octaprenyltransferase from Escherichia coli (strain SE11).